Reading from the N-terminus, the 312-residue chain is 4-diphosphocytidyl-2-C-methyl-D-erythritol kinase (312 aa).

Lysine 10 is an active-site residue. 105–115 (PVAGGMAGGSA) contributes to the ATP binding site. Aspartate 146 is a catalytic residue.

This sequence belongs to the GHMP kinase family. IspE subfamily.

The catalysed reaction is 4-CDP-2-C-methyl-D-erythritol + ATP = 4-CDP-2-C-methyl-D-erythritol 2-phosphate + ADP + H(+). It participates in isoprenoid biosynthesis; isopentenyl diphosphate biosynthesis via DXP pathway; isopentenyl diphosphate from 1-deoxy-D-xylulose 5-phosphate: step 3/6. Catalyzes the phosphorylation of the position 2 hydroxy group of 4-diphosphocytidyl-2C-methyl-D-erythritol. This is 4-diphosphocytidyl-2-C-methyl-D-erythritol kinase from Corynebacterium glutamicum (strain R).